Here is a 364-residue protein sequence, read N- to C-terminus: Mannonate dehydratase (364 aa).

Belongs to the mannonate dehydratase family. The cofactor is Fe(2+). Mn(2+) is required as a cofactor.

It carries out the reaction D-mannonate = 2-dehydro-3-deoxy-D-gluconate + H2O. The protein operates within carbohydrate metabolism; pentose and glucuronate interconversion. Its function is as follows. Catalyzes the dehydration of D-mannonate. This chain is Mannonate dehydratase, found in Streptococcus equi subsp. zooepidemicus (strain MGCS10565).